Here is a 288-residue protein sequence, read N- to C-terminus: UTP--glucose-1-phosphate uridylyltransferase (288 aa).

Belongs to the UDPGP type 2 family.

The catalysed reaction is alpha-D-glucose 1-phosphate + UTP + H(+) = UDP-alpha-D-glucose + diphosphate. Its pathway is glycolipid metabolism; diglucosyl-diacylglycerol biosynthesis. Catalyzes the formation of UDP-glucose from glucose-1-phosphate and UTP. This is an intermediate step in the biosynthesis of diglucosyl-diacylglycerol (Glc2-DAG), i.e. a glycolipid found in the membrane, which is also used as a membrane anchor for lipoteichoic acid (LTA). The protein is UTP--glucose-1-phosphate uridylyltransferase (gtaB) of Staphylococcus epidermidis (strain ATCC 35984 / DSM 28319 / BCRC 17069 / CCUG 31568 / BM 3577 / RP62A).